The sequence spans 188 residues: Adrenodoxin, mitochondrial (188 aa).

The transit peptide at 1–64 (MAAAPGARLL…RPLSVSARAR (64 aa)) directs the protein to the mitochondrion. At Ser-67 the chain carries Phosphoserine. The 2Fe-2S ferredoxin-type domain occupies 69–175 (DKITVHFKNR…NMTVRVPEAV (107 aa)). At Lys-70 the chain carries N6-acetyllysine; alternate. Lys-70 bears the N6-succinyllysine; alternate mark. The [2Fe-2S] cluster site is built by Cys-110, Cys-116, Cys-119, and Cys-156. The residue at position 162 (Lys-162) is an N6-succinyllysine. Position 181 is a phosphoserine (Ser-181).

The protein belongs to the adrenodoxin/putidaredoxin family. Interacts with CYP11A1. [2Fe-2S] cluster serves as cofactor.

It is found in the mitochondrion matrix. In terms of biological role, essential for the synthesis of various steroid hormones, participates in the reduction of mitochondrial cytochrome P450 for steroidogenesis. Transfers electrons from adrenodoxin reductase to CYP11A1, a cytochrome P450 that catalyzes cholesterol side-chain cleavage. Does not form a ternary complex with adrenodoxin reductase and CYP11A1 but shuttles between the two enzymes to transfer electrons. This is Adrenodoxin, mitochondrial (Fdx1) from Mus musculus (Mouse).